Reading from the N-terminus, the 418-residue chain is Histidine--tRNA ligase (418 aa).

The protein belongs to the class-II aminoacyl-tRNA synthetase family. Homodimer.

It is found in the cytoplasm. The enzyme catalyses tRNA(His) + L-histidine + ATP = L-histidyl-tRNA(His) + AMP + diphosphate + H(+). The chain is Histidine--tRNA ligase from Dehalococcoides mccartyi (strain ATCC BAA-2266 / KCTC 15142 / 195) (Dehalococcoides ethenogenes (strain 195)).